We begin with the raw amino-acid sequence, 485 residues long: Glutamyl-tRNA(Gln) amidotransferase subunit A (485 aa).

Residues Lys-79 and Ser-154 each act as charge relay system in the active site. Ser-178 functions as the Acyl-ester intermediate in the catalytic mechanism.

The protein belongs to the amidase family. GatA subfamily. As to quaternary structure, heterotrimer of A, B and C subunits.

The enzyme catalyses L-glutamyl-tRNA(Gln) + L-glutamine + ATP + H2O = L-glutaminyl-tRNA(Gln) + L-glutamate + ADP + phosphate + H(+). Functionally, allows the formation of correctly charged Gln-tRNA(Gln) through the transamidation of misacylated Glu-tRNA(Gln) in organisms which lack glutaminyl-tRNA synthetase. The reaction takes place in the presence of glutamine and ATP through an activated gamma-phospho-Glu-tRNA(Gln). The sequence is that of Glutamyl-tRNA(Gln) amidotransferase subunit A from Staphylococcus epidermidis (strain ATCC 12228 / FDA PCI 1200).